The chain runs to 394 residues: D-aspartate oxidase (394 aa).

FAD contacts are provided by Ile-19, Ala-57, Ser-58, and Gly-62. Residues 190–210 form a helical membrane-spanning segment; the sequence is LIGHEPTAGVIVCVGLGALVL. Residue Asn-214 is glycosylated (N-linked (GlcNAc...) asparagine). Arg-342, Gly-373, and Gln-375 together coordinate FAD.

This sequence belongs to the DAMOX/DASOX family. FAD serves as cofactor.

The protein localises to the membrane. The enzyme catalyses D-aspartate + O2 + H2O = oxaloacetate + H2O2 + NH4(+). Its function is as follows. Selectively catalyzes the oxidative deamination of acidic amino acids. Protects the organism from the toxicity of D-amino acids. Enables the organism to utilize D-amino acids as a source of nutrients. Enables the organism to utilize D-aspartate and D-asparagine as a source of nitrogen. May play a role in its interaction with the host. The protein is D-aspartate oxidase of Cryptococcus neoformans var. grubii serotype A (strain H99 / ATCC 208821 / CBS 10515 / FGSC 9487) (Filobasidiella neoformans var. grubii).